The sequence spans 289 residues: Phosphatidylglycerol--prolipoprotein diacylglyceryl transferase (289 aa).

Transmembrane regions (helical) follow at residues 24-44, 70-90, and 111-131; these read GIAIRWYGTMYIVAFAIVYLL, GGVLIGGRIGYILFYGFDWFL, and GINGMSFHGGLIGVAIALWLF. Arg158 lines the a 1,2-diacyl-sn-glycero-3-phospho-(1'-sn-glycerol) pocket. The next 2 membrane-spanning stretches (helical) occupy residues 219–239 and 253–273; these read GYLSGLYLIGYGTVRFFIEFF and FSMGQVLCFLMIAAGIGILVW.

The protein belongs to the Lgt family.

The protein resides in the cell inner membrane. It carries out the reaction L-cysteinyl-[prolipoprotein] + a 1,2-diacyl-sn-glycero-3-phospho-(1'-sn-glycerol) = an S-1,2-diacyl-sn-glyceryl-L-cysteinyl-[prolipoprotein] + sn-glycerol 1-phosphate + H(+). It participates in protein modification; lipoprotein biosynthesis (diacylglyceryl transfer). Its function is as follows. Catalyzes the transfer of the diacylglyceryl group from phosphatidylglycerol to the sulfhydryl group of the N-terminal cysteine of a prolipoprotein, the first step in the formation of mature lipoproteins. The polypeptide is Phosphatidylglycerol--prolipoprotein diacylglyceryl transferase (Chlorobaculum tepidum (strain ATCC 49652 / DSM 12025 / NBRC 103806 / TLS) (Chlorobium tepidum)).